A 137-amino-acid polypeptide reads, in one-letter code: Large-conductance mechanosensitive channel (137 aa).

A run of 4 helical transmembrane segments spans residues Ala9–Phe29, Ile32–Val52, Phe54–Ala74, and Ile79–Ile99.

It belongs to the MscL family. As to quaternary structure, homopentamer.

The protein resides in the cell inner membrane. Functionally, channel that opens in response to stretch forces in the membrane lipid bilayer. May participate in the regulation of osmotic pressure changes within the cell. In Pseudomonas fluorescens (strain ATCC BAA-477 / NRRL B-23932 / Pf-5), this protein is Large-conductance mechanosensitive channel.